The chain runs to 970 residues: Villin-3 (970 aa).

Gelsolin-like repeat units lie at residues 31–111 (AVPV…ERFL), 151–219 (TVHV…EDGK), 273–339 (VLTR…TVIF), 416–484 (KFYS…PAEF), 536–576 (AIQV…QELA), and 643–714 (NFTQ…PQFF). A disordered region spans residues 741-908 (DGVKPKLDKP…EGQPENEEGL (168 aa)). Over residues 755 to 778 (TTSSSHTGRSSVPEKSQRSRSMSF) the composition is skewed to polar residues. Positions 833–842 (AASIAAISAS) are enriched in low complexity. Residues 878-893 (KDSTPSKDSPTVTPTI) are compositionally biased toward polar residues. Positions 905–970 (EEGLPVYPYE…NRLKIALQLF (66 aa)) constitute an HP domain.

Belongs to the villin/gelsolin family. As to expression, expressed in roots, young leaves, and inflorescences, mostly in the vasculature of roots, leaves, and filaments of the anthers and in epidermal cells of the elongation zone and root hairs. Also detected in guard cells.

It is found in the cytoplasm. It localises to the cytoskeleton. Ca(2+)-regulated actin-binding protein. Binds actin microfilaments (MFs). Involved in actin filament bundling, severing and capping. Caps the barbed end of actin filaments and is able to sever them in a calcium-dependent manner. MF severing is promoted by VLN1. The sequence is that of Villin-3 from Oryza sativa subsp. japonica (Rice).